A 282-amino-acid polypeptide reads, in one-letter code: uncharacterized protein (282 aa).

It belongs to the glycosyltransferase 2 family. WaaE/KdtX subfamily.

This is an uncharacterized protein from Rickettsia conorii (strain ATCC VR-613 / Malish 7).